The chain runs to 352 residues: Desmethylxanthohumol 6'-O-methyltransferase (352 aa).

Position 219 (Asp-219) interacts with S-adenosyl-L-methionine. His-257 functions as the Proton acceptor in the catalytic mechanism.

This sequence belongs to the class I-like SAM-binding methyltransferase superfamily. Cation-independent O-methyltransferase family. As to quaternary structure, homodimer. Highly expressed in lupulin glands. Detected in early-, mid- and late-stage cones.

It localises to the cytoplasm. The catalysed reaction is desmethylxanthohumol + S-adenosyl-L-methionine = xanthohumol + S-adenosyl-L-homocysteine + H(+). The enzyme catalyses xanthogalenol + S-adenosyl-L-methionine = 4'-O-methylxanthohumol + S-adenosyl-L-homocysteine + H(+). Its pathway is secondary metabolite biosynthesis. Its activity is regulated as follows. Inhibited by S-adenosyl homocysteine. Functionally, involved in the biosynthesis of prenylated phenolics natural products which contribute to the bitter taste of beer and display broad biological activities. Catalyzes the biosynthesis of xanthohumol. Methylates desmethylxanthohumol and xanthogalenol, but not caffeic acid, prenylflavanones, simple phenols or phenylpropanoids. This is Desmethylxanthohumol 6'-O-methyltransferase from Humulus lupulus (European hop).